Reading from the N-terminus, the 336-residue chain is Protein-glutamate methylesterase/protein-glutamine glutaminase 1 (336 aa).

Residues 2–119 (KIAIVNDMPL…GNPQEAAAPL (118 aa)) form the Response regulatory domain. Aspartate 53 carries the 4-aspartylphosphate modification. A CheB-type methylesterase domain is found at 147–336 (TASRQRLVAI…APRLLEIFPK (190 aa)). Residues serine 159, histidine 186, and aspartate 279 contribute to the active site.

The protein belongs to the CheB family. In terms of processing, phosphorylated by CheA. Phosphorylation of the N-terminal regulatory domain activates the methylesterase activity.

The protein localises to the cytoplasm. The enzyme catalyses [protein]-L-glutamate 5-O-methyl ester + H2O = L-glutamyl-[protein] + methanol + H(+). It carries out the reaction L-glutaminyl-[protein] + H2O = L-glutamyl-[protein] + NH4(+). Involved in chemotaxis. Part of a chemotaxis signal transduction system that modulates chemotaxis in response to various stimuli. Catalyzes the demethylation of specific methylglutamate residues introduced into the chemoreceptors (methyl-accepting chemotaxis proteins or MCP) by CheR. Also mediates the irreversible deamidation of specific glutamine residues to glutamic acid. In Pseudomonas fluorescens (strain Pf0-1), this protein is Protein-glutamate methylesterase/protein-glutamine glutaminase 1.